A 58-amino-acid chain; its full sequence is Large ribosomal subunit protein bL32 (58 aa).

The interval 1-23 (MAVPARHTSSAKKNRRRTHYKLT) is disordered. A compositionally biased stretch (basic residues) spans 9 to 20 (SSAKKNRRRTHY).

This sequence belongs to the bacterial ribosomal protein bL32 family.

The sequence is that of Large ribosomal subunit protein bL32 (rpmF) from Lactococcus lactis subsp. cremoris (Streptococcus cremoris).